The sequence spans 474 residues: MASTLRLSTSALRSSTLAGKPVVQSVAFNGLRCYSTGKTKSLKETFADKLPGELEKVKKLRKEHGNKVIGELTLDQAYGGARGVKCLVWEGSVLDSEEGIRFRGLTIPECQKLLPKAPGGEEPLPEGLFWLLLTGEVPSEQQVRDLSAEWAARSDLPKFIEELIDRCPSTLHPMAQFSLAVTALEHESAFAKAYAKGINKKEYWHYTFEDSMDLIAKLPTIAAKIYRNVFKDGKVAPIQKDKDYSYNLANQLGFADNKDFVELMRLYLTIHSDHEGGNVSAHTTHLVGSALSSPMLSLAAGLNGLAGPLHGLANQEVLNWLTEMKKVVGNDLSDQSIKDYLWSTLNAGRVVPGYGHAVLRKTDPRYTSQREFALRKLPDDPMFKLVSQVYKIAPGVLTEHGKTKNPYPNVDAHSGVLLQYYGLTEANYYTVLFGVSRALGVLPQLIIDRAFGAPIERPKSFSTEAYAKLVGAKL.

A mitochondrion-targeting transit peptide spans 1 to 35 (MASTLRLSTSALRSSTLAGKPVVQSVAFNGLRCYS). Catalysis depends on residues histidine 310, histidine 356, and aspartate 411.

This sequence belongs to the citrate synthase family.

Its subcellular location is the mitochondrion matrix. It catalyses the reaction oxaloacetate + acetyl-CoA + H2O = citrate + CoA + H(+). Its pathway is carbohydrate metabolism; tricarboxylic acid cycle; isocitrate from oxaloacetate: step 1/2. This Emericella nidulans (strain FGSC A4 / ATCC 38163 / CBS 112.46 / NRRL 194 / M139) (Aspergillus nidulans) protein is Citrate synthase, mitochondrial (citA).